We begin with the raw amino-acid sequence, 505 residues long: RNA-splicing ligase RtcB homolog (505 aa).

Mn(2+) contacts are provided by Asp-119, Cys-122, His-227, His-259, and His-353. 226–230 serves as a coordination point for GMP; the sequence is NHYAE. GMP is bound by residues 353 to 354, 402 to 405, Ser-409, 428 to 431, and Lys-504; these read HN, GGSM, and HGAG. The active-site GMP-histidine intermediate is the His-428.

This sequence belongs to the RtcB family. As to quaternary structure, catalytic component of the tRNA-splicing ligase complex. The cofactor is Mn(2+).

The protein localises to the nucleus. It localises to the cytoplasm. It carries out the reaction a 3'-end 3'-phospho-ribonucleotide-RNA + a 5'-end dephospho-ribonucleoside-RNA + GTP = a ribonucleotidyl-ribonucleotide-RNA + GMP + diphosphate. It catalyses the reaction a 3'-end 2',3'-cyclophospho-ribonucleotide-RNA + a 5'-end dephospho-ribonucleoside-RNA + GTP + H2O = a ribonucleotidyl-ribonucleotide-RNA + GMP + diphosphate + H(+). Its function is as follows. Catalytic subunit of the tRNA-splicing ligase complex that acts by directly joining spliced tRNA halves to mature-sized tRNAs. Required for the ligation of mRNAs and specifically, regulates xbp-1 mRNA splicing during the endoplasmic reticulum stress-induced unfolded protein response. Has a neuroprotective role in the age-dependent degeneration of dopamine neurons, which is mediated by xbp-1. The chain is RNA-splicing ligase RtcB homolog from Caenorhabditis elegans.